Consider the following 283-residue polypeptide: K88 fimbrial protein AC (283 aa).

The signal sequence occupies residues 1–21; sequence MKKTLIALAIAASAASGMAHA.

The protein belongs to the fimbrial K88 protein family. K88 fimbria, 0.1-1 micrometer in length and 7 nanometers in diameter, is composed of about 100 identical subunits.

It is found in the fimbrium. K88 major fimbrial subunit. Fimbriae (also called pili), are polar filaments radiating from the surface of the bacterium to a length of 0.5-1.5 micrometers and numbering 100-300 per cell. They enable bacteria to colonize the epithelium of specific host organs. This chain is K88 fimbrial protein AC (faeG), found in Escherichia coli.